A 199-amino-acid chain; its full sequence is Transgelin-2 (199 aa).

The residue at position 2 (A2) is an N-acetylalanine. Phosphoserine is present on S11. N6-acetyllysine occurs at positions 17 and 20. A Calponin-homology (CH) domain is found at 24-136 (ADLEQILIQW…RTLMNLGGLA (113 aa)). S163 is modified (phosphoserine). Residue K171 forms a Glycyl lysine isopeptide (Lys-Gly) (interchain with G-Cter in SUMO2) linkage. Residues 174-199 (IGLQMGTNRGASQAGMTGYGMPRQIL) form a Calponin-like repeat. T180 carries the phosphothreonine modification. 2 positions are modified to omega-N-methylarginine: R182 and R196.

It belongs to the calponin family. As to expression, expressed in epididymis (at protein level).

The protein is Transgelin-2 (TAGLN2) of Homo sapiens (Human).